The primary structure comprises 438 residues: Glycerol-3-phosphate acyltransferase 3 (438 aa).

A helical transmembrane segment spans residues 14 to 34; sequence WLTLVGGLILLPSAFGLSLGI. Serine 68 and serine 77 each carry phosphoserine. A run of 2 helical transmembrane segments spans residues 137 to 157 and 161 to 181; these read ISPR…CFLL and VTLA…VGQL. An HXXXXD motif motif is present at residues 229-234; sequence HTSPID.

It belongs to the 1-acyl-sn-glycerol-3-phosphate acyltransferase family. Most abundant in epididymal fat, followed by small intestine, brown adipose tissue, kidney, heart and colon.

It localises to the endoplasmic reticulum membrane. It catalyses the reaction sn-glycerol 3-phosphate + an acyl-CoA = a 1-acyl-sn-glycero-3-phosphate + CoA. The catalysed reaction is a 1-acyl-sn-glycero-3-phosphate + an acyl-CoA = a 1,2-diacyl-sn-glycero-3-phosphate + CoA. The enzyme catalyses dodecanoyl-CoA + sn-glycerol 3-phosphate = 1-dodecanoyl-sn-glycerol 3-phosphate + CoA. It carries out the reaction sn-glycerol 3-phosphate + hexadecanoyl-CoA = 1-hexadecanoyl-sn-glycero-3-phosphate + CoA. It catalyses the reaction sn-glycerol 3-phosphate + (9Z)-octadecenoyl-CoA = 1-(9Z-octadecenoyl)-sn-glycero-3-phosphate + CoA. The catalysed reaction is (9Z,12Z)-octadecadienoyl-CoA + sn-glycerol 3-phosphate = 1-(9Z,12Z)-octadecadienoyl-sn-glycero-3-phosphate + CoA. The enzyme catalyses 1-tetradecanoyl-sn-glycerol 3-phosphate + (9Z)-octadecenoyl-CoA = 1-tetradecanoyl-2-(9Z)-octadecenoyl-sn-glycero-3-phosphate + CoA. It carries out the reaction 1-hexadecanoyl-sn-glycero-3-phosphate + (9Z)-octadecenoyl-CoA = 1-hexadecanoyl-2-(9Z-octadecenoyl)-sn-glycero-3-phosphate + CoA. It catalyses the reaction 1-(9Z-octadecenoyl)-sn-glycero-3-phosphate + (9Z)-octadecenoyl-CoA = 1,2-di-(9Z-octadecenoyl)-sn-glycero-3-phosphate + CoA. The catalysed reaction is 1-(6Z,9Z,12Z-octadecatrienoyl)-sn-glycero-3-phosphate + (9Z)-octadecenoyl-CoA = (6Z,9Z,12Z)-octadecatrienoyl-2-(9Z)-octadecenoyl-sn-glycero-3-phosphate + CoA. The enzyme catalyses 1-(9Z,12Z,15Z)-octadecatrienoyl-sn-glycero-3-phosphate + (9Z)-octadecenoyl-CoA = 1-(9Z,12Z,15Z)-octadecatrienoyl-2-(9Z)-octadecenoyl-sn-glycero-3-phosphate + CoA. It carries out the reaction 1-(9Z-octadecenoyl)-sn-glycero-3-phosphate + tetradecanoyl-CoA = 1-(9Z)-octadecenoyl-2-tetradecanoyl-sn-glycero-3-phosphate + CoA. It catalyses the reaction 1-(9Z-octadecenoyl)-sn-glycero-3-phosphate + hexadecanoyl-CoA = 1-(9Z)-octadecenoyl-2-hexadecanoyl-sn-glycero-3-phosphate + CoA. The catalysed reaction is 1-(9Z-octadecenoyl)-sn-glycero-3-phosphate + octadecanoyl-CoA = 1-(9Z-octadecenoyl)-2-octadecanoyl-sn-glycero-3-phosphate + CoA. The enzyme catalyses 1-(9Z-octadecenoyl)-sn-glycero-3-phosphate + (9Z,12Z)-octadecadienoyl-CoA = 1-(9Z)-octadecenoyl-2-(9Z,12Z)-octadecadienoyl-sn-glycero-3-phosphate + CoA. It carries out the reaction 1-(5Z,8Z,11Z,14Z-eicosatetraenoyl)-sn-glycero-3-phosphate + (9Z)-octadecenoyl-CoA = 1-(5Z,8Z,11Z,14Z)-eicosatetraenoyl-2-(9Z)-octadecenoyl-sn-glycero-3-phosphate + CoA. It functions in the pathway glycerolipid metabolism; triacylglycerol biosynthesis. It participates in phospholipid metabolism; CDP-diacylglycerol biosynthesis; CDP-diacylglycerol from sn-glycerol 3-phosphate: step 1/3. Converts glycerol-3-phosphate to 1-acyl-sn-glycerol-3-phosphate (lysophosphatidic acid or LPA) by incorporating an acyl moiety at the sn-1 position of the glycerol backbone. Also converts LPA into 1,2-diacyl-sn-glycerol-3-phosphate (phosphatidic acid or PA) by incorporating an acyl moiety at the sn-2 position of the glycerol backbone. Protects cells against lipotoxicity. This is Glycerol-3-phosphate acyltransferase 3 from Mus musculus (Mouse).